The sequence spans 175 residues: Lithostathine (175 aa).

The N-terminal stretch at 1–26 (MLPSLGLPRLSWMLLSCLMLLSQIQG) is a signal peptide. A propeptide spanning residues 27–37 (ENSQKELPSAR) is cleaved from the precursor. One can recognise a C-type lectin domain in the interval 38–173 (ISCPSGSMAY…NLNLPYVCKF (136 aa)). 3 disulfide bridges follow: Cys40–Cys51, Cys68–Cys171, and Cys146–Cys163.

As to quaternary structure, cleaved to give an A chain and a B chain joined by a disulfide bond. As to expression, in pancreatic acinar cells.

The protein resides in the secreted. In terms of biological role, might act as an inhibitor of spontaneous calcium carbonate precipitation. This Bos taurus (Bovine) protein is Lithostathine (PTP).